The primary structure comprises 469 residues: Tubulin gamma-2 chain (469 aa).

142–148 is a GTP binding site; sequence AGGTGSG.

Belongs to the tubulin family.

It localises to the cytoplasm. It is found in the cytoskeleton. The protein localises to the microtubule organizing center. Its function is as follows. Tubulin is the major constituent of microtubules. The gamma chain is found at microtubule organizing centers (MTOC) such as the spindle poles, suggesting that it is involved in the minus-end nucleation of microtubule assembly. The polypeptide is Tubulin gamma-2 chain (TUBG2) (Zea mays (Maize)).